Reading from the N-terminus, the 206-residue chain is LysM and putative peptidoglycan-binding domain-containing protein 2 (206 aa).

The region spanning 59-103 (IEHCLSPSDTLQGIALKYGVTMEQIKRANKLFSTDCIFLRKSLNI) is the LysM domain. A disordered region spans residues 184-206 (AQRLKEEDDLRHDGSYATCSYQH). A compositionally biased stretch (basic and acidic residues) spans 186 to 197 (RLKEEDDLRHDG).

The chain is LysM and putative peptidoglycan-binding domain-containing protein 2 (lysmd2) from Xenopus laevis (African clawed frog).